The primary structure comprises 133 residues: Interleukin-4 (133 aa).

A signal peptide spans 1–24; it reads MGLTYQLIPALVCLLAFTSTFVHG. N-linked (GlcNAc...) asparagine glycans are attached at residues Asn-28, Asn-45, Asn-62, Asn-84, Asn-96, and Asn-102. Intrachain disulfides connect Cys-48–Cys-85 and Cys-70–Cys-113.

The protein belongs to the IL-4/IL-13 family.

The protein resides in the secreted. Its function is as follows. Participates in at least several B-cell activation processes as well as of other cell types. It is a costimulator of DNA-synthesis. It induces the expression of class II MHC molecules on resting B-cells. It enhances both secretion and cell surface expression of IgE and IgG1. It also regulates the expression of the low affinity Fc receptor for IgE (CD23) on both lymphocytes and monocytes. Positively regulates IL31RA expression in macrophages. Stimulates autophagy in dendritic cells by interfering with mTORC1 signaling and through the induction of RUFY4. The chain is Interleukin-4 (IL4) from Felis catus (Cat).